Reading from the N-terminus, the 60-residue chain is UPF0391 membrane protein CCNA_00709 (60 aa).

2 helical membrane passes run 4 to 24 (WAII…SGLA) and 33 to 53 (ILFF…GTVF).

Belongs to the UPF0391 family.

Its subcellular location is the cell membrane. The chain is UPF0391 membrane protein CCNA_00709 from Caulobacter vibrioides (strain NA1000 / CB15N) (Caulobacter crescentus).